A 427-amino-acid chain; its full sequence is Phosphatidylinositol 4-phosphate 5-kinase 10 (427 aa).

The 419-residue stretch at 1 to 419 (MFTREITAKD…RFQDFVSQIF (419 aa)) folds into the PIPK domain. Disordered regions lie at residues 247-287 (SRGS…DSEN) and 334-355 (MKIPGRARRVGRGESGSVVGKQ). Residues 379 to 400 (YGVRKRLEHCYKSIQHSSKTIS) form an activation loop region.

It catalyses the reaction a 1,2-diacyl-sn-glycero-3-phospho-(1D-myo-inositol 4-phosphate) + ATP = a 1,2-diacyl-sn-glycero-3-phospho-(1D-myo-inositol-4,5-bisphosphate) + ADP + H(+). This chain is Phosphatidylinositol 4-phosphate 5-kinase 10 (PIP5K10), found in Arabidopsis thaliana (Mouse-ear cress).